Consider the following 343-residue polypeptide: Mitochondrial amidoxime-reducing component 1 (343 aa).

Residues 1–25 (MSNTVFSGAVGPLRAAALSISRHRL) are Mitochondrial matrix-facing. Residues 26 to 44 (PLLCAAGLGLTAVASWMWW) traverse the membrane as a helical; Signal-anchor for type II membrane protein segment. At 45–343 (RKRQGEAEDL…DPVYRVTRKG (299 aa)) the chain is on the cytoplasmic side. K69, S70, and R94 together coordinate Mo-molybdopterin. The tract at residues 95 to 186 (HWLVVTEEGN…SSQPYRLVHF (92 aa)) is MOSC N-terminal region. Residues 181–339 (YRLVHFEADV…IRVGDPVYRV (159 aa)) form the MOSC domain. Mo-molybdopterin-binding residues include S215, R242, R276, C277, and Y321.

Requires Mo-molybdopterin as cofactor.

The protein localises to the mitochondrion outer membrane. The protein resides in the membrane. It catalyses the reaction N(omega)-hydroxy-L-arginine + 2 Fe(II)-[cytochrome b5] + 2 H(+) = L-arginine + 2 Fe(III)-[cytochrome b5] + H2O. Its function is as follows. Catalyzes the reduction of N-oxygenated molecules, acting as a counterpart of cytochrome P450 and flavin-containing monooxygenases in metabolic cycles. As a component of prodrug-converting system, reduces a multitude of N-hydroxylated prodrugs particularly amidoximes, leading to increased drug bioavailability. May be involved in mitochondrial N(omega)-hydroxy-L-arginine (NOHA) reduction, regulating endogenous nitric oxide levels and biosynthesis. Postulated to cleave the N-OH bond of N-hydroxylated substrates in concert with electron transfer from NADH to cytochrome b5 reductase then to cytochrome b5, the ultimate electron donor that primes the active site for substrate reduction. This chain is Mitochondrial amidoxime-reducing component 1 (mtarc1), found in Xenopus laevis (African clawed frog).